A 385-amino-acid chain; its full sequence is S-adenosylmethionine synthase (385 aa).

H15 lines the ATP pocket. D17 is a Mg(2+) binding site. A K(+)-binding site is contributed by E43. Residues E56 and Q99 each contribute to the L-methionine site. Positions 99-109 (QSPDINKGINN) are flexible loop. ATP contacts are provided by residues 164 to 166 (DAK), 230 to 231 (RF), D239, 245 to 246 (RK), A262, and K266. D239 lines the L-methionine pocket. K270 is a binding site for L-methionine.

This sequence belongs to the AdoMet synthase family. In terms of assembly, homotetramer; dimer of dimers. It depends on Mg(2+) as a cofactor. K(+) serves as cofactor.

It is found in the cytoplasm. The enzyme catalyses L-methionine + ATP + H2O = S-adenosyl-L-methionine + phosphate + diphosphate. Its pathway is amino-acid biosynthesis; S-adenosyl-L-methionine biosynthesis; S-adenosyl-L-methionine from L-methionine: step 1/1. Its function is as follows. Catalyzes the formation of S-adenosylmethionine (AdoMet) from methionine and ATP. The overall synthetic reaction is composed of two sequential steps, AdoMet formation and the subsequent tripolyphosphate hydrolysis which occurs prior to release of AdoMet from the enzyme. The protein is S-adenosylmethionine synthase of Baumannia cicadellinicola subsp. Homalodisca coagulata.